We begin with the raw amino-acid sequence, 46 residues long: uncharacterized protein (46 aa).

Residues 1-46 (MEVTPLETGRARSHQKASTAAQPHAADEKMTGSTARRYLSQDHQSV) are disordered.

This is an uncharacterized protein from Treponema pallidum (strain Nichols).